The following is a 267-amino-acid chain: Tryptophan synthase alpha chain (267 aa).

Residues Glu-47 and Asp-58 each act as proton acceptor in the active site.

The protein belongs to the TrpA family. In terms of assembly, tetramer of two alpha and two beta chains.

The enzyme catalyses (1S,2R)-1-C-(indol-3-yl)glycerol 3-phosphate + L-serine = D-glyceraldehyde 3-phosphate + L-tryptophan + H2O. It participates in amino-acid biosynthesis; L-tryptophan biosynthesis; L-tryptophan from chorismate: step 5/5. In terms of biological role, the alpha subunit is responsible for the aldol cleavage of indoleglycerol phosphate to indole and glyceraldehyde 3-phosphate. The polypeptide is Tryptophan synthase alpha chain (Chlorobaculum parvum (strain DSM 263 / NCIMB 8327) (Chlorobium vibrioforme subsp. thiosulfatophilum)).